The chain runs to 239 residues: Small ribosomal subunit protein uS2 (239 aa).

The protein belongs to the universal ribosomal protein uS2 family.

The polypeptide is Small ribosomal subunit protein uS2 (Francisella philomiragia subsp. philomiragia (strain ATCC 25017 / CCUG 19701 / FSC 153 / O#319-036)).